A 483-amino-acid chain; its full sequence is Probable Xaa-Pro aminopeptidase MCYG_06503 (483 aa).

Residues D233, D244, E409, and E453 each contribute to the Mn(2+) site.

The protein belongs to the peptidase M24B family. Requires Mn(2+) as cofactor.

It catalyses the reaction Release of any N-terminal amino acid, including proline, that is linked to proline, even from a dipeptide or tripeptide.. Catalyzes the removal of a penultimate prolyl residue from the N-termini of peptides. In Arthroderma otae (strain ATCC MYA-4605 / CBS 113480) (Microsporum canis), this protein is Probable Xaa-Pro aminopeptidase MCYG_06503.